A 241-amino-acid polypeptide reads, in one-letter code: Phosphoadenosine 5'-phosphosulfate reductase (241 aa).

The active-site Nucleophile; cysteine thiosulfonate intermediate is the C235.

This sequence belongs to the PAPS reductase family. CysH subfamily.

The protein localises to the cytoplasm. It catalyses the reaction [thioredoxin]-disulfide + sulfite + adenosine 3',5'-bisphosphate + 2 H(+) = [thioredoxin]-dithiol + 3'-phosphoadenylyl sulfate. It participates in sulfur metabolism; hydrogen sulfide biosynthesis; sulfite from sulfate: step 3/3. Its function is as follows. Catalyzes the formation of sulfite from phosphoadenosine 5'-phosphosulfate (PAPS) using thioredoxin as an electron donor. The chain is Phosphoadenosine 5'-phosphosulfate reductase from Xanthomonas axonopodis pv. citri (strain 306).